The sequence spans 109 residues: Flagellar hook-basal body complex protein FliE (109 aa).

It belongs to the FliE family.

The protein resides in the bacterial flagellum basal body. This chain is Flagellar hook-basal body complex protein FliE, found in Pseudomonas fluorescens (strain SBW25).